We begin with the raw amino-acid sequence, 427 residues long: Glutamate-1-semialdehyde 2,1-aminomutase (427 aa).

Lysine 265 carries the N6-(pyridoxal phosphate)lysine modification.

Belongs to the class-III pyridoxal-phosphate-dependent aminotransferase family. HemL subfamily. Homodimer. It depends on pyridoxal 5'-phosphate as a cofactor.

Its subcellular location is the cytoplasm. The enzyme catalyses (S)-4-amino-5-oxopentanoate = 5-aminolevulinate. The protein operates within porphyrin-containing compound metabolism; protoporphyrin-IX biosynthesis; 5-aminolevulinate from L-glutamyl-tRNA(Glu): step 2/2. This chain is Glutamate-1-semialdehyde 2,1-aminomutase, found in Pseudomonas syringae pv. tomato (strain ATCC BAA-871 / DC3000).